Here is a 580-residue protein sequence, read N- to C-terminus: NADH-quinone oxidoreductase subunit C/D (580 aa).

The NADH dehydrogenase I subunit C stretch occupies residues 1-171 (MSLDQAIPEA…PPFVLTDRLF (171 aa)). The tract at residues 195 to 580 (ELMVLNFGPH…IDFVMSDVDR (386 aa)) is NADH dehydrogenase I subunit D.

In the N-terminal section; belongs to the complex I 30 kDa subunit family. This sequence in the C-terminal section; belongs to the complex I 49 kDa subunit family. As to quaternary structure, NDH-1 is composed of 13 different subunits. Subunits NuoB, CD, E, F, and G constitute the peripheral sector of the complex.

The protein localises to the cell inner membrane. The enzyme catalyses a quinone + NADH + 5 H(+)(in) = a quinol + NAD(+) + 4 H(+)(out). NDH-1 shuttles electrons from NADH, via FMN and iron-sulfur (Fe-S) centers, to quinones in the respiratory chain. The immediate electron acceptor for the enzyme in this species is believed to be ubiquinone. Couples the redox reaction to proton translocation (for every two electrons transferred, four hydrogen ions are translocated across the cytoplasmic membrane), and thus conserves the redox energy in a proton gradient. This chain is NADH-quinone oxidoreductase subunit C/D, found in Cereibacter sphaeroides (strain ATCC 17029 / ATH 2.4.9) (Rhodobacter sphaeroides).